The sequence spans 64 residues: Large ribosomal subunit protein bL35 (64 aa).

2 stretches are compositionally biased toward basic residues: residues 1–15 (MPKNKTHSGASKRFK) and 27–42 (AGKRHLLEHKSSKKTR). A disordered region spans residues 1 to 45 (MPKNKTHSGASKRFKITGSGKVLRERAGKRHLLEHKSSKKTRSLT).

This sequence belongs to the bacterial ribosomal protein bL35 family.

The polypeptide is Large ribosomal subunit protein bL35 (Streptomyces griseus subsp. griseus (strain JCM 4626 / CBS 651.72 / NBRC 13350 / KCC S-0626 / ISP 5235)).